The primary structure comprises 611 residues: Phosphatidylinositol 3,4,5-trisphosphate 3-phosphatase and protein-tyrosine-phosphatase PTEN2A (611 aa).

2 disordered regions span residues 1 to 42 (MSSE…GVAS) and 87 to 109 (GIRL…SSAT). Ser91 bears the Phosphoserine mark. Residues 100–109 (TTTEGTSSAT) are compositionally biased toward low complexity. The Phosphatase tensin-type domain maps to 145–324 (RRYQEGGFDL…KYFERILTYF (180 aa)). Cys263 acts as the Phosphocysteine intermediate in catalysis. A C2 tensin-type domain is found at 331–458 (GRRCMLRGFR…FMVEVVLADI (128 aa)). A compositionally biased stretch (polar residues) spans 462–486 (IPTNPSSETASKTPEETSAANSSPV). The segment at 462-589 (IPTNPSSETA…VNASSSSESE (128 aa)) is disordered. Basic and acidic residues predominate over residues 495-507 (PDKETENPDKDDV). At Ser509 the chain carries Phosphoserine. Polar residues-rich tracts occupy residues 514–530 (DSTG…SQTP) and 549–565 (VSIS…QGVT).

Belongs to the PTEN phosphatase protein family. Expressed in seedlings, roots, stems, leaves, flowers and siliques. However, at protein level, not observed in older leaves and mature siliques.

The enzyme catalyses O-phospho-L-tyrosyl-[protein] + H2O = L-tyrosyl-[protein] + phosphate. It catalyses the reaction a 1,2-diacyl-sn-glycero-3-phospho-(1D-myo-inositol-3,4,5-trisphosphate) + H2O = a 1,2-diacyl-sn-glycero-3-phospho-(1D-myo-inositol-4,5-bisphosphate) + phosphate. In terms of biological role, binds phosphatidic acid. Protein tyrosine phosphatase that also exhibits lipid phosphatase activity. Hydrolyzed poorly p-nitrophenyl phosphate (p-NPP). Can use PtdIns isomers as substrates. Removes efficiently phosphate from the D3 position of the inositol ring, less from the D4 position and not at all from the D5 position on monophosphorylated PtdIns isomers (PIPs). The presence of a phosphate group in the D5 position on PIP(2) isomers reduces lipid phosphatase activity. Mostly active on PtdIns(3)P and PtdIns(3,4)P(2), to a lower extent, on PtdIns(4)P and PtdIns(3,5)P(2), but barely against PtdIns(3,4,5)P(3) as substrate. In Arabidopsis thaliana (Mouse-ear cress), this protein is Phosphatidylinositol 3,4,5-trisphosphate 3-phosphatase and protein-tyrosine-phosphatase PTEN2A.